A 340-amino-acid chain; its full sequence is Adenosine kinase (340 aa).

The active site involves Asp-293.

The protein belongs to the carbohydrate kinase PfkB family. The cofactor is Mg(2+).

The catalysed reaction is adenosine + ATP = AMP + ADP + H(+). It functions in the pathway purine metabolism; AMP biosynthesis via salvage pathway; AMP from adenosine: step 1/1. Functionally, ATP dependent phosphorylation of adenosine and other related nucleoside analogs to monophosphate derivatives. ADO1 does not play a major role in adenine utilization in yeast. Its physiological role could primarily be to recycle adenosine produced by the methyl cycle. The protein is Adenosine kinase of Saccharomyces cerevisiae (strain ATCC 204508 / S288c) (Baker's yeast).